A 265-amino-acid chain; its full sequence is 3-methyl-2-oxobutanoate hydroxymethyltransferase (265 aa).

Mg(2+)-binding residues include Asp-41 and Asp-80. 3-methyl-2-oxobutanoate-binding positions include 41–42, Asp-80, and Lys-110; that span reads DS. Glu-112 contributes to the Mg(2+) binding site. The active-site Proton acceptor is the Glu-179.

It belongs to the PanB family. As to quaternary structure, homodecamer; pentamer of dimers. Mg(2+) is required as a cofactor.

The protein localises to the cytoplasm. It catalyses the reaction 3-methyl-2-oxobutanoate + (6R)-5,10-methylene-5,6,7,8-tetrahydrofolate + H2O = 2-dehydropantoate + (6S)-5,6,7,8-tetrahydrofolate. Its pathway is cofactor biosynthesis; (R)-pantothenate biosynthesis; (R)-pantoate from 3-methyl-2-oxobutanoate: step 1/2. Catalyzes the reversible reaction in which hydroxymethyl group from 5,10-methylenetetrahydrofolate is transferred onto alpha-ketoisovalerate to form ketopantoate. The polypeptide is 3-methyl-2-oxobutanoate hydroxymethyltransferase (Pseudothermotoga lettingae (strain ATCC BAA-301 / DSM 14385 / NBRC 107922 / TMO) (Thermotoga lettingae)).